A 155-amino-acid chain; its full sequence is RNA pyrophosphohydrolase (155 aa).

A Nudix hydrolase domain is found at 5-147 (RYRPNVAAIV…KRPVYKKVLE (143 aa)). Positions 42–63 (GGIDKGESPKEALLRELKEEIG) match the Nudix box motif.

This sequence belongs to the Nudix hydrolase family. RppH subfamily. The cofactor is a divalent metal cation.

In terms of biological role, accelerates the degradation of transcripts by removing pyrophosphate from the 5'-end of triphosphorylated RNA, leading to a more labile monophosphorylated state that can stimulate subsequent ribonuclease cleavage. This Nitratiruptor sp. (strain SB155-2) protein is RNA pyrophosphohydrolase.